Consider the following 170-residue polypeptide: Phosphopantetheine adenylyltransferase (170 aa).

Substrate is bound at residue threonine 9. ATP is bound by residues 9–10 (TF) and histidine 17. Residues lysine 41, leucine 73, and arginine 87 each coordinate substrate. ATP-binding positions include 88 to 90 (GLR), glutamate 98, and 123 to 129 (YQFISGT).

This sequence belongs to the bacterial CoaD family. In terms of assembly, homohexamer. Mg(2+) serves as cofactor.

Its subcellular location is the cytoplasm. The catalysed reaction is (R)-4'-phosphopantetheine + ATP + H(+) = 3'-dephospho-CoA + diphosphate. It functions in the pathway cofactor biosynthesis; coenzyme A biosynthesis; CoA from (R)-pantothenate: step 4/5. Its function is as follows. Reversibly transfers an adenylyl group from ATP to 4'-phosphopantetheine, yielding dephospho-CoA (dPCoA) and pyrophosphate. The chain is Phosphopantetheine adenylyltransferase from Bordetella petrii (strain ATCC BAA-461 / DSM 12804 / CCUG 43448).